The sequence spans 451 residues: V-type proton ATPase subunit S1 (451 aa).

The signal sequence occupies residues 1–16 (MRVLFAVFSLIMACQA). At 17-407 (YDAVLFSNSR…DCTGTFSSGS (391 aa)) the chain is on the lumenal side. N-linked (GlcNAc...) asparagine glycosylation is found at Asn191, Asn235, Asn249, and Asn330. Residues 408–428 (WMGIVSALVLIAGLMFGYVML) traverse the membrane as a helical segment. At 429–451 (QSVQTMDRFDDPKQRQIVINVRE) the chain is on the cytoplasmic side.

It belongs to the vacuolar ATPase subunit S1 family. Accessory component of the multisubunit proton-transporting vacuolar (V)-ATPase protein pump. Expressed in pharynx, hypodermis, intestine, vulval hypodermis and the H-shape excretory cell.

The protein resides in the membrane. In terms of biological role, accessory subunit of the proton-transporting vacuolar (V)-ATPase protein pump, which is required for luminal acidification of secretory vesicles. In the germline, required for the trafficking of the receptor RME-2 to the oocyte cell membrane where it regulates the uptake of yolk proteins. Also, plays an essential role in osmoregulation in the embryo, probably by regulating the proper formation of the eggshell. The protein is V-type proton ATPase subunit S1 of Caenorhabditis elegans.